The sequence spans 435 residues: MAVTVETLDKLERRITLTLSADELKNEVESRLKKLARTTKADGFRPGKVPMSVVAQRYGYSVQYEVMNDKVGQAFAAATGEAQLRVAGTPRITEKDGSADGQVSFDATFEVYPEVTIGDLSALEVERVTTEVTDVAIDRTLDILRKQRRTFADRPQGEYAVDGDRVTIDFEGKIDGETFQGGKAEAFQFILGEGRMLEAFEKAVRGMKTGESKTFPLAFPADYHGADVAGKEADFLVTLTRIEAQNLPEVDAAFAESLGIADATVDGLRADIKKNLEREVKFRVAARNKQSVMSALEKVATFDLPKALVDNEMARLVENARADLKQRGIADADKAPIPTEMFQPQAERRVRLGLTMAELVRANALSATMEQIKAHIDEMAQSYEKPEEVVRWYFGDQQRLSEVEAVVIEANVANFVLGQAQVVDKQLPFDELMGA.

The PPIase FKBP-type domain occupies 163–248 (GDRVTIDFEG…LTRIEAQNLP (86 aa)).

Belongs to the FKBP-type PPIase family. Tig subfamily.

The protein localises to the cytoplasm. The catalysed reaction is [protein]-peptidylproline (omega=180) = [protein]-peptidylproline (omega=0). Its function is as follows. Involved in protein export. Acts as a chaperone by maintaining the newly synthesized protein in an open conformation. Functions as a peptidyl-prolyl cis-trans isomerase. The protein is Trigger factor of Leptothrix cholodnii (strain ATCC 51168 / LMG 8142 / SP-6) (Leptothrix discophora (strain SP-6)).